We begin with the raw amino-acid sequence, 227 residues long: NADH-quinone oxidoreductase subunit C (227 aa).

It belongs to the complex I 30 kDa subunit family. NDH-1 is composed of 14 different subunits. Subunits NuoB, C, D, E, F, and G constitute the peripheral sector of the complex.

It is found in the cell inner membrane. The enzyme catalyses a quinone + NADH + 5 H(+)(in) = a quinol + NAD(+) + 4 H(+)(out). NDH-1 shuttles electrons from NADH, via FMN and iron-sulfur (Fe-S) centers, to quinones in the respiratory chain. The immediate electron acceptor for the enzyme in this species is believed to be ubiquinone. Couples the redox reaction to proton translocation (for every two electrons transferred, four hydrogen ions are translocated across the cytoplasmic membrane), and thus conserves the redox energy in a proton gradient. The chain is NADH-quinone oxidoreductase subunit C from Legionella pneumophila (strain Paris).